The primary structure comprises 111 residues: UPF0339 protein in ptx operon 5'region (111 aa).

2 consecutive repeat copies span residues aspartate 10–arginine 58 and serine 61–valine 109.

It belongs to the UPF0339 family. Duplicated subfamily.

The chain is UPF0339 protein in ptx operon 5'region from Stutzerimonas stutzeri (Pseudomonas stutzeri).